Consider the following 251-residue polypeptide: MAIHGDRDDELRLFQTGEHPCGYWSDRVARDLVLDPHDRRLGGLYPLALSWGFRRSGDLVYRPHCAHCQACVAVRIPVARFAPDRSQRRCAARNEDLEVRITAATARDDLFALYHRYLTHRHANGGMDDHGPHEFEQFLIGSWSHTRFMEMRLPGHDGQPSQLLGVAVTDVTEHGLSAVYTFFDPDHAARGLGTFAILQQIEWARREGLPHVYLGYWIRGHQKMDYKRRYRPLEAYDGRRWHDFDDELDGR.

Belongs to the R-transferase family. Bpt subfamily.

The protein resides in the cytoplasm. The catalysed reaction is N-terminal L-glutamyl-[protein] + L-leucyl-tRNA(Leu) = N-terminal L-leucyl-L-glutamyl-[protein] + tRNA(Leu) + H(+). It catalyses the reaction N-terminal L-aspartyl-[protein] + L-leucyl-tRNA(Leu) = N-terminal L-leucyl-L-aspartyl-[protein] + tRNA(Leu) + H(+). Its function is as follows. Functions in the N-end rule pathway of protein degradation where it conjugates Leu from its aminoacyl-tRNA to the N-termini of proteins containing an N-terminal aspartate or glutamate. This Stenotrophomonas maltophilia (strain R551-3) protein is Aspartate/glutamate leucyltransferase.